A 459-amino-acid chain; its full sequence is Ribulose bisphosphate carboxylase (459 aa).

Residue N111 participates in substrate binding. K166 serves as the catalytic Proton acceptor. K168 provides a ligand contact to substrate. Mg(2+) contacts are provided by K191, D193, and E194. K191 carries the post-translational modification N6-carboxylysine. Catalysis depends on H287, which acts as the Proton acceptor. R288, H321, and S368 together coordinate substrate.

The protein belongs to the RuBisCO large chain family. Type II subfamily. In terms of assembly, homodimer. Mg(2+) serves as cofactor.

It catalyses the reaction 2 (2R)-3-phosphoglycerate + 2 H(+) = D-ribulose 1,5-bisphosphate + CO2 + H2O. The enzyme catalyses D-ribulose 1,5-bisphosphate + O2 = 2-phosphoglycolate + (2R)-3-phosphoglycerate + 2 H(+). Functionally, ruBisCO catalyzes two reactions: the carboxylation of D-ribulose 1,5-bisphosphate, the primary event in carbon dioxide fixation, as well as the oxidative fragmentation of the pentose substrate. Both reactions occur simultaneously and in competition at the same active site. This chain is Ribulose bisphosphate carboxylase, found in Cereibacter sphaeroides (strain ATCC 17029 / ATH 2.4.9) (Rhodobacter sphaeroides).